We begin with the raw amino-acid sequence, 345 residues long: Protein sdf-9 (345 aa).

Positions 33 to 284 constitute a Tyrosine-protein phosphatase domain; it reads NRNRVVKIVP…SFIYEAVLDY (252 aa).

It belongs to the protein-tyrosine phosphatase family. Expressed in the 2 embryonic head hypodermal cells XXXL/R.

The protein resides in the cytoplasm. It is found in the cell membrane. Together with eak-4 and phosphatase eak-6, negatively regulates dauer larva formation downstream of insulin-like receptor daf-2 and in parallel of age-1, pdk-1 and akt-1. This Caenorhabditis elegans protein is Protein sdf-9.